Consider the following 174-residue polypeptide: uncharacterized protein (174 aa).

Residues 137-174 form a disordered region; it reads TNVTLGDDTPKSYDAPVSAIPPPATATTANATGVKPLE.

This is an uncharacterized protein from Acanthamoeba polyphaga (Amoeba).